The following is a 331-amino-acid chain: Ribosomal RNA small subunit methyltransferase H (331 aa).

S-adenosyl-L-methionine-binding positions include Gly38–Tyr40, Asp56, Phe83, Asp100, and Gln107. The disordered stretch occupies residues Asp287–Arg331.

Belongs to the methyltransferase superfamily. RsmH family.

The protein localises to the cytoplasm. It catalyses the reaction cytidine(1402) in 16S rRNA + S-adenosyl-L-methionine = N(4)-methylcytidine(1402) in 16S rRNA + S-adenosyl-L-homocysteine + H(+). Functionally, specifically methylates the N4 position of cytidine in position 1402 (C1402) of 16S rRNA. The chain is Ribosomal RNA small subunit methyltransferase H from Cereibacter sphaeroides (strain KD131 / KCTC 12085) (Rhodobacter sphaeroides).